Here is a 273-residue protein sequence, read N- to C-terminus: Putative phosphoenolpyruvate synthase regulatory protein (273 aa).

ADP is bound at residue 153–160 (GVSRSGKT).

The protein belongs to the pyruvate, phosphate/water dikinase regulatory protein family. PSRP subfamily.

The catalysed reaction is [pyruvate, water dikinase] + ADP = [pyruvate, water dikinase]-phosphate + AMP + H(+). It catalyses the reaction [pyruvate, water dikinase]-phosphate + phosphate + H(+) = [pyruvate, water dikinase] + diphosphate. Its function is as follows. Bifunctional serine/threonine kinase and phosphorylase involved in the regulation of the phosphoenolpyruvate synthase (PEPS) by catalyzing its phosphorylation/dephosphorylation. The polypeptide is Putative phosphoenolpyruvate synthase regulatory protein (Delftia acidovorans (strain DSM 14801 / SPH-1)).